Here is an 886-residue protein sequence, read N- to C-terminus: MDKNFYKNSLNIFNSNFSMKANLSEKDKFYADFWEKNQIYQQILRKRRGNPRFILHDGPPYANGDIHIGHALNKILKDIIVRYKTMAGFYSPFVPGWDTHGLPIENKIINQIGSKSTLEIRRKSNDFANSQILAQMAQFKKLNLLTDFKQIYQTNTPNYEAKQLKLFKKMVSRGLVYRALKPVYWSPSSQSALAEAEIEYLEYRSPSLFTSFDIKKGNNFVAENDKLIIWTTTPWTLIANSGVAVGENFDYVRIKNEENFYVLAANLLEKLAAIFDWKHYEIIDNFPGKSILGIKYLHPIFEKICPIVSGNHVSLDVGSGLVHLAPLFGEDDYWIGRENNLEMVMHVNDDGKFNENAGQFSGQFYANSNKLITEFLEKKSKILHLSFIDHSFPHDWRTLKPVIYRGTPQWFVSIEKIKKDLEKAIEEIEFPENWLKKRLTKMVVERKDWLISRQRSWGIPLIIFYDQNKEPVLDKPEIFDYIISLVEKFGSRIWYEKTTDELLPEKYQNLGWTKENDILDVWFDSGVSFFAANISDEKPPFDIYFEGSDQYRGWFNSSLINSVIYFGFSPYKKLLSHGFVVDAKGNKMSKSRGNGVDPLVILSKYGCDIFRLWVANSEYYNDIVYSEAIFEQNVEIYRKIRNTVRFLITNLADFKPKKYELTEVDLYIFNKIQKLKNEIIQNYDQNRFVRVVKIINNFIIEFSNFYLSIVKDILYADKKESLKRRQVQYNLYELLQVLNIAIAPIMPTTAEEIYSFIQKNNKQISVHMEEFFKESHFDEELVAKWDEFFQIKDSVYQLIEQKIKSKEIKRPNEVGVLLKTDSDFIKSIDLEKLLMVAKVEFSNEKTEILQLNWEKCPRCWNHFEKINKVCARCFEVLSEIVPEKNS.

Positions 60 to 70 (PYANGDIHIGH) match the 'HIGH' region motif. Glu-546 lines the L-isoleucyl-5'-AMP pocket. Positions 587 to 591 (KMSKS) match the 'KMSKS' region motif. Position 590 (Lys-590) interacts with ATP. Zn(2+) contacts are provided by Cys-856, Cys-859, Cys-870, and Cys-873.

This sequence belongs to the class-I aminoacyl-tRNA synthetase family. IleS type 1 subfamily. Monomer. Zn(2+) is required as a cofactor.

The protein resides in the cytoplasm. It carries out the reaction tRNA(Ile) + L-isoleucine + ATP = L-isoleucyl-tRNA(Ile) + AMP + diphosphate. In terms of biological role, catalyzes the attachment of isoleucine to tRNA(Ile). As IleRS can inadvertently accommodate and process structurally similar amino acids such as valine, to avoid such errors it has two additional distinct tRNA(Ile)-dependent editing activities. One activity is designated as 'pretransfer' editing and involves the hydrolysis of activated Val-AMP. The other activity is designated 'posttransfer' editing and involves deacylation of mischarged Val-tRNA(Ile). The protein is Isoleucine--tRNA ligase of Mesomycoplasma hyopneumoniae (strain 7448) (Mycoplasma hyopneumoniae).